A 549-amino-acid chain; its full sequence is DDB1- and CUL4-associated factor 11 (549 aa).

The segment covering 1–24 (MGSRNSSSAGSGSLEPSEGLSRRG) has biased composition (low complexity). Positions 1 to 40 (MGSRNSSSAGSGSLEPSEGLSRRGAGLRRSEEEEEEDEDV) are disordered. Residues Ser73 and Ser75 each carry the phosphoserine modification. Positions 80–89 (DSAWDGRLGD) are enriched in basic and acidic residues. Positions 80–100 (DSAWDGRLGDRYNPPVDATPD) are disordered. WD repeat units follow at residues 170–210 (TYSQ…HKFK), 216–258 (DVGW…TALD), 263–302 (ERRFAVFSIAVSSDGREVLGGANDGCLYVFDREQNRRTLQ), 305–345 (SHED…EDDP), 353–392 (GHQDGITFIDSKGDARYLISNSKDQTIKLWDIRRFSSREG), 435–480 (GVLH…KKLT), and 481–520 (NHKACVRDVSWHPFEEKIVSSSWDGSLRLWQYRQAEYFQD).

In terms of assembly, interacts with DDB1 and CUL4A.

Its pathway is protein modification; protein ubiquitination. Functionally, may function as a substrate receptor for CUL4-DDB1 E3 ubiquitin-protein ligase complex. The polypeptide is DDB1- and CUL4-associated factor 11 (Dcaf11) (Rattus norvegicus (Rat)).